We begin with the raw amino-acid sequence, 456 residues long: Toxin CfTX-1 (456 aa).

A signal peptide spans 1–20 (MVKMLFFAFLPLLFMTGIAA).

It belongs to the jellyfish toxin family. Type I subfamily. Oligomer. Contains disulfide bonds. In terms of tissue distribution, nematocytes.

The protein resides in the secreted. It is found in the nematocyst. The protein localises to the target cell membrane. Functionally, may cause profound effects on the cardiovascular system of anesthetized rats (at 25 ug/kg), since the fraction containing this toxin and CfTX-2 produces an initial increase in mean arterial pressure, followed by cardiovascular collapse in all animals within 1 minute of injection. To note, the same fraction does not induce significant change in heart rate. Has weak hemolytic activity. Is lethal to crayfish. Causes cutaneous inflammation in humans. May act as a pore-forming toxin, disrupting normal transmembrane ion concentration gradients in susceptible cells. In Chironex fleckeri (Australian box jellyfish), this protein is Toxin CfTX-1.